The sequence spans 443 residues: C4-dicarboxylate transport protein (443 aa).

Helical transmembrane passes span 10–30, 46–66, 78–98, 143–163, 199–219, 224–244, 291–311, 332–352, and 354–374; these read SLYF…HFYP, LIKM…IAGM, YALL…LIVV, IVGA…VIFG, PIGA…GSLV, LMIC…GGIC, VVGL…SIYL, ITLL…TGSG, and IVLA…LALI.

Belongs to the dicarboxylate/amino acid:cation symporter (DAACS) (TC 2.A.23) family.

The protein resides in the cell inner membrane. Functionally, responsible for the transport of dicarboxylates such as succinate, fumarate, and malate from the periplasm across the membrane. The sequence is that of C4-dicarboxylate transport protein from Pseudomonas fluorescens (strain SBW25).